The sequence spans 426 residues: Aspartate aminotransferase, mitochondrial (426 aa).

The N-terminal 29 residues, 1 to 29 (MIRSARLISNIKFGQKNIRQFSTNTNWWA), are a transit peptide targeting the mitochondrion. 3 residues coordinate substrate: glycine 60, tryptophan 156, and asparagine 209. Residue lysine 273 is modified to N6-(pyridoxal phosphate)lysine. Residue arginine 401 coordinates substrate.

This sequence belongs to the class-I pyridoxal-phosphate-dependent aminotransferase family. Homodimer. Requires pyridoxal 5'-phosphate as cofactor.

Its subcellular location is the mitochondrion matrix. It localises to the cell membrane. It carries out the reaction L-aspartate + 2-oxoglutarate = oxaloacetate + L-glutamate. The enzyme catalyses L-kynurenine + 2-oxoglutarate = kynurenate + L-glutamate + H2O. Its function is as follows. Plays a key role in amino acid metabolism. Important for metabolite exchange between mitochondria and cytosol. This chain is Aspartate aminotransferase, mitochondrial (aatA), found in Dictyostelium discoideum (Social amoeba).